Here is an 863-residue protein sequence, read N- to C-terminus: Oleate activated transcription factor 3 (863 aa).

A DNA-binding region (zn(2)-C6 fungal-type) is located at residues 18 to 47; sequence VCTNCKKRKSKCDRTKPCGTCVRLGDVDSC. Polar residues predominate over residues 52–63; the sequence is DSSGQPESSPSL. The tract at residues 52-99 is disordered; sequence DSSGQPESSPSLNDADPLRKQSTPAERISPGFIKKRRSSQTRQDEDHW.

It belongs to the OAF3 family.

It localises to the cytoplasm. Its subcellular location is the nucleus. The protein localises to the mitochondrion. Transcriptional inhibitor with a significantly increased number of target genes in response to oleate. This is Oleate activated transcription factor 3 (OAF3) from Saccharomyces cerevisiae (strain ATCC 204508 / S288c) (Baker's yeast).